The chain runs to 102 residues: RNA-binding protein Hfq (102 aa).

The Sm domain maps to 9 to 68; the sequence is DPFLNALRRERVPVSIYLVNGIKLQGQIESFDQFVILLKNTVSQMVYKHAISTVVPSRPV. Positions 63–102 are disordered; it reads VPSRPVSHHSNNASGGTSSNYHHGSSAQNTSAQQDSEETE. The span at 70–96 shows a compositional bias: polar residues; sequence HHSNNASGGTSSNYHHGSSAQNTSAQQ.

This sequence belongs to the Hfq family. In terms of assembly, homohexamer.

Its function is as follows. RNA chaperone that binds small regulatory RNA (sRNAs) and mRNAs to facilitate mRNA translational regulation in response to envelope stress, environmental stress and changes in metabolite concentrations. Also binds with high specificity to tRNAs. This Shigella boydii serotype 18 (strain CDC 3083-94 / BS512) protein is RNA-binding protein Hfq.